The following is a 159-amino-acid chain: Transcriptional repressor NrdR (159 aa).

Residues 1–26 are disordered; that stretch reads MRCPFCAHDNSQVKDSRPSEDNTSIR. The segment at 3-34 is a zinc-finger region; it reads CPFCAHDNSQVKDSRPSEDNTSIRRRRQCEGC. The segment covering 11-24 has biased composition (basic and acidic residues); it reads SQVKDSRPSEDNTS. In terms of domain architecture, ATP-cone spans 49-139; sequence VVVVKSGERR…VYRDFTEARD (91 aa).

The protein belongs to the NrdR family. Zn(2+) serves as cofactor.

Functionally, negatively regulates transcription of bacterial ribonucleotide reductase nrd genes and operons by binding to NrdR-boxes. In Novosphingobium aromaticivorans (strain ATCC 700278 / DSM 12444 / CCUG 56034 / CIP 105152 / NBRC 16084 / F199), this protein is Transcriptional repressor NrdR.